Here is a 568-residue protein sequence, read N- to C-terminus: Protein downstream neighbor of son homolog (568 aa).

Disordered regions lie at residues 28 to 48 (NKLAARVSNNNNRRPRHQVDE) and 311 to 355 (MPLK…DDDE). Residues 315–335 (SDNSGNAHDNSFNEESTTTSL) show a composition bias toward polar residues.

The protein belongs to the DONSON family. Expression peaks during late G1 and S phase (at protein level).

Its subcellular location is the nucleus. Functionally, essential for DNA amplification in the ovary and required for cell proliferation during development. This is Protein downstream neighbor of son homolog (hd) from Drosophila melanogaster (Fruit fly).